A 228-amino-acid chain; its full sequence is Probable septum site-determining protein MinC (228 aa).

This sequence belongs to the MinC family. In terms of assembly, interacts with MinD and FtsZ.

In terms of biological role, cell division inhibitor that blocks the formation of polar Z ring septums. Rapidly oscillates between the poles of the cell to destabilize FtsZ filaments that have formed before they mature into polar Z rings. Prevents FtsZ polymerization. The chain is Probable septum site-determining protein MinC from Pectobacterium atrosepticum (strain SCRI 1043 / ATCC BAA-672) (Erwinia carotovora subsp. atroseptica).